A 60-amino-acid polypeptide reads, in one-letter code: Large ribosomal subunit protein bL32 (60 aa).

Residues Met1–Glu60 form a disordered region. A compositionally biased stretch (basic and acidic residues) spans Ser11–Leu22.

This sequence belongs to the bacterial ribosomal protein bL32 family.

This Pseudomonas aeruginosa (strain LESB58) protein is Large ribosomal subunit protein bL32.